Reading from the N-terminus, the 475-residue chain is ATP synthase subunit beta (475 aa).

153–160 (GGAGVGKT) is an ATP binding site.

It belongs to the ATPase alpha/beta chains family. As to quaternary structure, F-type ATPases have 2 components, CF(1) - the catalytic core - and CF(0) - the membrane proton channel. CF(1) has five subunits: alpha(3), beta(3), gamma(1), delta(1), epsilon(1). CF(0) has three main subunits: a(1), b(2) and c(9-12). The alpha and beta chains form an alternating ring which encloses part of the gamma chain. CF(1) is attached to CF(0) by a central stalk formed by the gamma and epsilon chains, while a peripheral stalk is formed by the delta and b chains.

It is found in the cell membrane. It catalyses the reaction ATP + H2O + 4 H(+)(in) = ADP + phosphate + 5 H(+)(out). In terms of biological role, produces ATP from ADP in the presence of a proton gradient across the membrane. The catalytic sites are hosted primarily by the beta subunits. The chain is ATP synthase subunit beta from Limosilactobacillus reuteri (strain DSM 20016) (Lactobacillus reuteri).